A 358-amino-acid chain; its full sequence is 3-ketosteroid-9-alpha-monooxygenase, ferredoxin reductase component (358 aa).

The FAD-binding FR-type domain maps to 12 to 124 (DHVLELQIAE…LAPSGNFVPT (113 aa)). The 2Fe-2S ferredoxin-type domain occupies 269–358 (ATAVVELDGQ…SDSVEVTYDE (90 aa)). Residues Cys305, Cys310, Cys313, and Cys343 each coordinate [2Fe-2S] cluster.

Monomer. The two-component system 3-ketosteroid-9-alpha-monooxygenase is composed of an oxygenase component KshA and a reductase component KshB. FAD is required as a cofactor. Requires [2Fe-2S] cluster as cofactor.

It catalyses the reaction androsta-1,4-diene-3,17-dione + 2 reduced [2Fe-2S]-[ferredoxin] + O2 + 2 H(+) = 9alpha-hydroxyandrosta-1,4-diene-3,17-dione + 2 oxidized [2Fe-2S]-[ferredoxin] + H2O. Its pathway is lipid metabolism; steroid biosynthesis. Involved in the degradation of cholesterol. Catalyzes the introduction of a 9a-hydroxyl moiety into 1,4-androstadiene-3,17-dione (ADD) to yield the 9alpha-hydroxy-1,4-androstadiene-3,17-dione (9OHADD) intermediate which spontaneously form 3-hydroxy-9,10-seconandrost-1,3,5(10)-triene-9,17-dione (HSA) via the meta-cleavage of ring B with concomitant aromatization of ring A. In Mycobacterium tuberculosis (strain CDC 1551 / Oshkosh), this protein is 3-ketosteroid-9-alpha-monooxygenase, ferredoxin reductase component (hmp).